An 826-amino-acid polypeptide reads, in one-letter code: Arsenite oxidase subunit AioA (826 aa).

3 residues coordinate [3Fe-4S] cluster: cysteine 22, cysteine 25, and cysteine 29. 4 residues coordinate substrate: histidine 196, glutamate 204, arginine 420, and histidine 424.

This sequence belongs to the prokaryotic molybdopterin-containing oxidoreductase family. As to quaternary structure, heterodimer consisting of a large and a small subunit. [3Fe-4S] cluster is required as a cofactor. Mo-bis(molybdopterin guanine dinucleotide) serves as cofactor.

It carries out the reaction 2 oxidized [azurin] + arsenite + H2O = 2 reduced [azurin] + arsenate + 3 H(+). Its function is as follows. Involved in the detoxification of arsenic. Oxidizes As(III)O3(3-) (arsenite) to the somewhat less toxic As(V)O4(3-) (arsenate). This chain is Arsenite oxidase subunit AioA (aioA), found in Alcaligenes faecalis.